The following is a 184-amino-acid chain: Probable RNA 2'-phosphotransferase (184 aa).

Belongs to the KptA/TPT1 family.

Functionally, removes the 2'-phosphate from RNA via an intermediate in which the phosphate is ADP-ribosylated by NAD followed by a presumed transesterification to release the RNA and generate ADP-ribose 1''-2''-cyclic phosphate (APPR&gt;P). May function as an ADP-ribosylase. This Escherichia coli O9:H4 (strain HS) protein is Probable RNA 2'-phosphotransferase.